The sequence spans 1375 residues: DNA-directed RNA polymerase subunit beta (1375 aa).

The protein belongs to the RNA polymerase beta chain family. The RNAP catalytic core consists of 2 alpha, 1 beta, 1 beta' and 1 omega subunit. When a sigma factor is associated with the core the holoenzyme is formed, which can initiate transcription.

It carries out the reaction RNA(n) + a ribonucleoside 5'-triphosphate = RNA(n+1) + diphosphate. Its function is as follows. DNA-dependent RNA polymerase catalyzes the transcription of DNA into RNA using the four ribonucleoside triphosphates as substrates. In Methylibium petroleiphilum (strain ATCC BAA-1232 / LMG 22953 / PM1), this protein is DNA-directed RNA polymerase subunit beta.